A 123-amino-acid polypeptide reads, in one-letter code: UPF0738 protein Bcer98_0913 (123 aa).

Belongs to the UPF0738 family.

In Bacillus cytotoxicus (strain DSM 22905 / CIP 110041 / 391-98 / NVH 391-98), this protein is UPF0738 protein Bcer98_0913.